The chain runs to 84 residues: Large ribosomal subunit protein bL27 (84 aa).

The segment at 1–21 (MAHKKGASSTRNGRDSNAQRL) is disordered. A compositionally biased stretch (polar residues) spans 7–19 (ASSTRNGRDSNAQ).

The protein belongs to the bacterial ribosomal protein bL27 family.

The sequence is that of Large ribosomal subunit protein bL27 from Clavibacter michiganensis subsp. michiganensis (strain NCPPB 382).